Reading from the N-terminus, the 868-residue chain is Sporulation-specific protein 75 (868 aa).

The Extracellular segment spans residues 1–34 (MNATKELTFNLLNKFQDKERFGSAQRHAGISLKG). Asparagine 2 is a glycosylation site (N-linked (GlcNAc...) asparagine). Residues 35–55 (FISGILFSFLYFLFQLSLFII) traverse the membrane as a helical segment. At 56–127 (LRSRFKTIYQ…DNYLFLRFLK (72 aa)) the chain is on the cytoplasmic side. The chain crosses the membrane as a helical span at residues 128–148 (LLIFFFAVLSIINIPILIPIH). The Extracellular portion of the chain corresponds to 149–187 (YFSRDILKENEGERYEQSFRTTSKLDKWTMSNLSPNSSN). A glycan (N-linked (GlcNAc...) asparagine) is linked at asparagine 184. A helical transmembrane segment spans residues 188–208 (TLICHLFLSIFVVLWFHFILS). Over 209–481 (SELRFVNRLG…AKYFSANILR (273 aa)) the chain is Cytoplasmic. A helical transmembrane segment spans residues 482–502 (IFVIIGWILPVAFLGLISQIP). A glycan (N-linked (GlcNAc...) asparagine) is linked at asparagine 503. The Extracellular portion of the chain corresponds to 503 to 527 (NISSLIPFTKIIHFQSPFIREVAKN). The helical transmembrane segment at 528-548 (LIPIVTLIIIIEIVPYFFRWL) threads the bilayer. Over 549–569 (SYLRGLKTGAQIEADVQNWYF) the chain is Cytoplasmic. A helical transmembrane segment spans residues 570–590 (VFVFIHLFVVVTISSGFSIII). Residues 591-611 (ERLLNNPVSIPALLANDLPKC) lie on the Extracellular side of the membrane. The chain crosses the membrane as a helical span at residues 612–632 (ANFFCSFVLIRGMAYAGGNLL). At 633 to 660 (RIKELLFELFYYKWKRSTPHAQFKRLKT) the chain is on the cytoplasmic side. The chain crosses the membrane as a helical span at residues 661 to 683 (SLFFQLGSIYPIFSVLGCIGIIY). Over 684-692 (SVVAPIILL) the chain is Extracellular. A helical membrane pass occupies residues 693-713 (LCCISFSMVFFSFSYLFKYQY). Topologically, residues 714 to 730 (NKENYSETFGKLYIQAL) are cytoplasmic. Residues 731–751 (MQLYAGIYFMEFCLLGLFTLF) traverse the membrane as a helical segment. Topologically, residues 752 to 753 (DQ) are extracellular. The helical transmembrane segment at 754–774 (YTLSTIMLVVFALTVITHSKI) threads the bilayer. The Cytoplasmic segment spans residues 775 to 868 (SKQIKSKPQR…DCHLENSHLH (94 aa)).

The protein belongs to the CSC1 (TC 1.A.17) family.

It localises to the membrane. Functionally, acts as an osmosensitive calcium-permeable cation channel. Required for spore wall assembly and ascus formation. This is Sporulation-specific protein 75 (SPO75) from Saccharomyces cerevisiae (strain ATCC 204508 / S288c) (Baker's yeast).